Consider the following 193-residue polypeptide: Cysteine and glycine-rich protein 2 (193 aa).

The 52-residue stretch at 10–61 folds into the LIM zinc-binding 1 domain; the sequence is CGACGRTVYHAEEVQCDGRSFHRCCFLCMVCRKNLDSTTVAIHDEEIYCKSC. A Nuclear localization signal motif is present at residues 64-69; sequence KKYGPK. Lysine 91 participates in a covalent cross-link: Glycyl lysine isopeptide (Lys-Gly) (interchain with G-Cter in SUMO2). An N6-acetyllysine mark is found at lysine 112 and lysine 131. In terms of domain architecture, LIM zinc-binding 2 spans 119–170; that stretch reads CSRCGDSVYAAEKIIGAGKPWHKNCFRCAKCGKSLESTTLTEKEGEIYCKGC. Lysine 137 carries the N6-acetyllysine; alternate modification. Lysine 137 is modified (N6-succinyllysine; alternate). At lysine 161 the chain carries N6-acetyllysine.

As to quaternary structure, interacts with KAT14. The LIM domain 1 is necessary and sufficient for this interaction. Interacts with GLRX3.

It is found in the nucleus. Its function is as follows. Drastically down-regulated in response to PDGF-BB or cell injury, that promote smooth muscle cell proliferation and dedifferentiation. Seems to play a role in the development of the embryonic vascular system. The chain is Cysteine and glycine-rich protein 2 (CSRP2) from Bos taurus (Bovine).